Reading from the N-terminus, the 214-residue chain is Ribonuclease T (214 aa).

The Exonuclease domain maps to 20 to 195 (VVVDVETAGF…YDTQQTAELF (176 aa)). Mg(2+) contacts are provided by D23, E25, H182, and D187. Catalysis depends on H182, which acts as the Proton donor/acceptor.

The protein belongs to the RNase T family. Homodimer. It depends on Mg(2+) as a cofactor.

Its function is as follows. Trims short 3' overhangs of a variety of RNA species, leaving a one or two nucleotide 3' overhang. Responsible for the end-turnover of tRNA: specifically removes the terminal AMP residue from uncharged tRNA (tRNA-C-C-A). Also appears to be involved in tRNA biosynthesis. This is Ribonuclease T from Vibrio campbellii (strain ATCC BAA-1116).